A 397-amino-acid chain; its full sequence is Phosphoglycerate kinase (397 aa).

Substrate-binding positions include 25-27 (DLN), arginine 41, 64-67 (HLGR), arginine 118, and arginine 151. ATP-binding positions include lysine 202, glutamate 324, and 350–353 (GGDT).

This sequence belongs to the phosphoglycerate kinase family. Monomer.

It localises to the cytoplasm. The enzyme catalyses (2R)-3-phosphoglycerate + ATP = (2R)-3-phospho-glyceroyl phosphate + ADP. It functions in the pathway carbohydrate degradation; glycolysis; pyruvate from D-glyceraldehyde 3-phosphate: step 2/5. The protein is Phosphoglycerate kinase of Paracidovorax citrulli (strain AAC00-1) (Acidovorax citrulli).